The sequence spans 218 residues: MLKKIIILFLGIFLLSSCTDNFRNYFQRSANNKLFDVKGAKGGKRKPVYNNKYIALAKKNIVEDNIDYDNDVDDNYDNDGPLISEKIDNVKRNREMYLNMIKSDIARQKAEFSATQSNNVMTLSKANKKVRKDDSYKEKKIEEELNQIKAMLKETKRDITKYTCPNATVNQNYVPPVTNYEHVNYPPIKNSNPYNNTSKVKQKFIREDDDDTNNACSI.

The signal sequence occupies residues 1-17 (MLKKIIILFLGIFLLSS). Cysteine 18 carries N-palmitoyl cysteine lipidation. Cysteine 18 carries S-diacylglycerol cysteine lipidation. Residues 136 to 164 (YKEKKIEEELNQIKAMLKETKRDITKYTC) are a coiled coil.

The protein localises to the cell membrane. This is an uncharacterized protein from Rickettsia typhi (strain ATCC VR-144 / Wilmington).